A 295-amino-acid chain; its full sequence is ESX-3 secretion-associated protein EspG3 (295 aa).

This sequence belongs to the EspG family. In terms of assembly, interacts specifically with ESX-3-dependent PE/PPE proteins.

The protein localises to the cytoplasm. In terms of biological role, specific chaperone for cognate PE/PPE proteins. Plays an important role in preventing aggregation of PE/PPE dimers. The protein is ESX-3 secretion-associated protein EspG3 of Mycobacterium tuberculosis (strain CDC 1551 / Oshkosh).